An 82-amino-acid polypeptide reads, in one-letter code: Exodeoxyribonuclease 7 small subunit (82 aa).

It belongs to the XseB family. In terms of assembly, heterooligomer composed of large and small subunits.

It is found in the cytoplasm. The catalysed reaction is Exonucleolytic cleavage in either 5'- to 3'- or 3'- to 5'-direction to yield nucleoside 5'-phosphates.. Its function is as follows. Bidirectionally degrades single-stranded DNA into large acid-insoluble oligonucleotides, which are then degraded further into small acid-soluble oligonucleotides. The sequence is that of Exodeoxyribonuclease 7 small subunit from Coxiella burnetii (strain CbuG_Q212) (Coxiella burnetii (strain Q212)).